The following is a 340-amino-acid chain: Hyaluronan and proteoglycan link protein 2 (340 aa).

Positions 1 to 26 (MPGWLTLPTLCRFLLWAFTIFHKAQG) are cleaved as a signal peptide. One can recognise an Ig-like V-type domain in the interval 34 to 144 (PHYLLPPIHE…EDESVALTLS (111 aa)). 5 cysteine pairs are disulfide-bonded: Cys-57–Cys-128, Cys-170–Cys-240, Cys-194–Cys-215, Cys-265–Cys-336, and Cys-290–Cys-311. 2 consecutive Link domains span residues 148-242 (VVFP…FCFT) and 245-338 (LAGQ…YCYA).

The protein belongs to the HAPLN family. In terms of tissue distribution, expressed only in adult brain.

The protein resides in the secreted. It is found in the extracellular space. Its subcellular location is the extracellular matrix. In terms of biological role, mediates a firm binding of versican V2 to hyaluronic acid. May play a pivotal role in the formation of the hyaluronan-associated matrix in the central nervous system (CNS) which facilitates neuronal conduction and general structural stabilization. Binds to hyaluronic acid. The polypeptide is Hyaluronan and proteoglycan link protein 2 (HAPLN2) (Homo sapiens (Human)).